A 1744-amino-acid polypeptide reads, in one-letter code: Complement C4-B (1744 aa).

A signal peptide spans 1–19 (MRLLWGLIWASSFFTLSLQ). Cys-68 and Cys-97 are disulfide-bonded. Asn-226 carries N-linked (GlcNAc...) asparagine glycosylation. Cys-635 and Cys-669 form a disulfide bridge. The propeptide occupies 676 to 679 (RKKR). Intrachain disulfides connect Cys-702-Cys-728, Cys-703-Cys-735, and Cys-716-Cys-736. Positions 702 to 736 (CCQDGVTRLPMMRSCEQRAARVQQPDCREPFLSCC) constitute an Anaphylatoxin-like domain. N-linked (GlcNAc...) asparagine glycosylation occurs at Asn-862. Residue Ser-918 is modified to Phosphoserine. Positions 1010–1013 (CGEQ) form a cross-link, isoglutamyl cysteine thioester (Cys-Gln). Asn-1328 and Asn-1391 each carry an N-linked (GlcNAc...) asparagine glycan. Residues Tyr-1417, Tyr-1420, and Tyr-1422 each carry the sulfotyrosine modification. Positions 1447–1453 (RRNRRRR) are excised as a propeptide. 5 disulfide bridges follow: Cys-1471–Cys-1535, Cys-1583–Cys-1588, Cys-1595–Cys-1673, Cys-1618–Cys-1742, and Cys-1718–Cys-1727. The NTR domain maps to 1595–1742 (CPRQRRALER…FLQEYGTQGC (148 aa)).

In terms of assembly, in absence of complement activation, circulates in blood as a disulfide-linked trimer of an alpha, beta and gamma chain. Complement C4b is composed of complement C4b-A, complement C4 beta and complement C4 gamma chains that are associated via disulfide bonds. Non-enzymatic component of the C3 convertase, also named C4bC2b, composed of the serine protease complement C2b (C2), as well as complement C4b. Non-enzymatic component of the C5 convertase, also named C4bC2bC3b, composed of the serine protease complement C2b (C2), complement C3b, as well as complement C4b. Interacts with CR1 (via Sushi 1 and Sushi 2 domains). As to quaternary structure, (Microbial infection) Binds B.burgdorferi OspC, the interaction is inhibited by complement factor C2. This binding may inhibit the complement cascade and allow the bacteria to survive in the host bloodstream. Post-translationally, prior to secretion, the single-chain precursor is enzymatically cleaved by plasminogen (PLG) to yield non-identical chains alpha, beta and gamma. During activation of the complement systems, the alpha chain is cleaved into C4a and C4b by different proteases depending on the complement pathway: C4b stays linked to the beta and gamma chains, while C4a is released in the plasma. The alpha chain is cleaved by C1S to generate C4a and C4b following activation by the classical complement system. The alpha chain is cleaved to generate C4a and C4b by MASP2 following activation by the lectin complement system. The alpha chain is cleaved by GZMK to generate C4a and C4b following activation by the GZMK complement system. Further degradation of C4b by C1 into the inactive fragments C4c and C4d blocks the generation of C3 convertase. The proteolytic cleavages often are incomplete so that many structural forms can be found in plasma. Upon activation, the internal thioester bond reacts with carbohydrate antigens on the target surface to form amide or ester bonds, leading to covalent association with the surface of pathogens. In terms of processing, complement C4b interacts with complement C3b via a thioester linkage. Post-translationally, N- and O-glycosylated. O-glycosylated with a core 1 or possibly core 8 glycan. In terms of tissue distribution, complement component C4 is expressed at highest levels in the liver, at moderate levels in the adrenal cortex, adrenal medulla, thyroid gland, and the kidney, and at lowest levels in the heart, ovary, small intestine, thymus, pancreas and spleen. The extra-hepatic sites of expression may be important for the local protection and inflammatory response.

The protein resides in the secreted. It localises to the synapse. The protein localises to the cell projection. Its subcellular location is the axon. It is found in the dendrite. The protein resides in the cell surface. In terms of biological role, precursor of non-enzymatic components of the classical, lectin and GZMK complement pathways, which consist in a cascade of proteins that leads to phagocytosis and breakdown of pathogens and signaling that strengthens the adaptive immune system. Non-enzymatic component of C3 and C5 convertases. Generated following cleavage by complement proteases (C1S, MASP2 or GZMK, depending on the complement pathway), it covalently attaches to the surface of pathogens, where it acts as an opsonin that marks the surface of antigens for removal. It then recruits the serine protease complement C2b to form the C3 and C5 convertases, which cleave and activate C3 and C5, respectively, the next components of the complement pathways. Complement C4b-B isotype catalyzes the transacylation of the thioester carbonyl group to form ester bonds with carbohydrate antigens, while C4b-A isotype is responsible for effective binding to form amide bonds with immune aggregates or protein antigens. Its function is as follows. Putative humoral mediator released following cleavage by complement proteases (C1S, MASP2 or GZMK, depending on the complement pathway). While it is strongly similar to anaphylatoxins, its role is unclear. Was reported to act as a mediator of local inflammatory process; however these effects were probably due to contamination with C3a and/C5a anaphylatoxins in biological assays. The chain is Complement C4-B from Homo sapiens (Human).